A 2208-amino-acid chain; its full sequence is Glutamate synthase 1 [NADH], chloroplastic (2208 aa).

The transit peptide at 1–49 (MSAASSSSVLHLRTNQQLLSLRSLKNSTSVASQLAVTSGVSRRRSCTAR) directs the protein to the chloroplast. Residue C117 is the Nucleophile of the active site. Positions 117–521 (CGVGFVAELS…PGMMLLVDFE (405 aa)) constitute a Glutamine amidotransferase type-2 domain. The segment at 1040-1067 (GKSNTGEGGELPSRMEPLADGSRNPKRS) is disordered. FMN is bound at residue 1211-1268 (LAETHQTLVANDLRGRTVLQTDGQLKTGRDVAVAALLGAEEFGFSTAPLITLGCIMMR). [3Fe-4S] cluster is bound by residues C1264, C1270, and C1275. 1995–2009 (GGGDTGTDCIGTSIR) contributes to the NAD(+) binding site.

This sequence belongs to the glutamate synthase family. As to quaternary structure, monomer. Requires [3Fe-4S] cluster as cofactor. FAD serves as cofactor. It depends on FMN as a cofactor. As to expression, highly expressed in roots and at low levels in leaves.

It localises to the plastid. It is found in the chloroplast. The catalysed reaction is 2 L-glutamate + NAD(+) = L-glutamine + 2-oxoglutarate + NADH + H(+). It participates in amino-acid biosynthesis; L-glutamate biosynthesis via GLT pathway; L-glutamate from 2-oxoglutarate and L-glutamine (NAD(+) route): step 1/1. It functions in the pathway energy metabolism; nitrogen metabolism. Involved in glutamate biosynthesis. Required for non-photorespiratory ammonium assimilation. Probably involved in primary ammonium assimilation in roots. This chain is Glutamate synthase 1 [NADH], chloroplastic (GLT1), found in Arabidopsis thaliana (Mouse-ear cress).